The following is a 449-amino-acid chain: Gamma-aminobutyric acid receptor subunit delta (449 aa).

The N-terminal stretch at 1–24 (MDVLGWLLLPLLLLCTQPHHGARA) is a signal peptide. Residues 25–251 (MNDIGDYVGS…QLRRNRGVYI (227 aa)) are Extracellular-facing. N-linked (GlcNAc...) asparagine glycosylation is found at Asn103 and Asn106. Cys164 and Cys178 are oxidised to a cystine. A helical transmembrane segment spans residues 252-271 (IQSYMPSVLLVAMSWVSFWI). Residues 272–275 (SQAA) lie on the Cytoplasmic side of the membrane. A helical membrane pass occupies residues 276-298 (VPARVSLGITTVLTMTTLMVSAR). Residues 299–308 (SSLPRASAIK) are Extracellular-facing. A helical transmembrane segment spans residues 309–331 (ALDVYFWICYVFVFAALVEYAFA). Residues 332–423 (HFNADYRKKR…SRLKPIDADT (92 aa)) lie on the Cytoplasmic side of the membrane. Ser390 is modified (phosphoserine). The helical transmembrane segment at 424 to 446 (IDIYARAVFPAAFAAVNIIYWAA) threads the bilayer. Residues 447–449 (YTM) are Extracellular-facing.

Belongs to the ligand-gated ion channel (TC 1.A.9) family. Gamma-aminobutyric acid receptor (TC 1.A.9.5) subfamily. GABRD sub-subfamily. Heteropentamer, formed by a combination of alpha (GABRA1-6), beta (GABRB1-3), gamma (GABRG1-3), delta (GABRD), epsilon (GABRE), rho (GABRR1-3), pi (GABRP) and theta (GABRQ) chains, each subunit exhibiting distinct physiological and pharmacological properties. Found in the brain, in cerebellar granule cells. Expressed in lungs, in alveolar epithelium.

Its subcellular location is the cell membrane. It catalyses the reaction chloride(in) = chloride(out). Functionally, delta subunit of the heteropentameric ligand-gated chloride channel gated by gamma-aminobutyric acid (GABA), a major inhibitory neurotransmitter in the brain. GABA-gated chloride channels, also named GABA(A) receptors (GABAAR), consist of five subunits arranged around a central pore and contain GABA active binding site(s) located at the alpha and beta subunit interface(s). When activated by GABA, GABAARs selectively allow the flow of chloride anions across the cell membrane down their electrochemical gradient. GABAARs containing delta/GABRD subunits are predominantly expressed and located in extrasynaptic or perisynaptic positions on hippocampus and cerebellar granule cells, and contribute to the tonic GABAergic inhibition. GABAAR containing alpha-4-beta-3-delta subunits can simultaneously bind GABA and histamine where histamine binds at the interface of two neighboring beta subunits, which may be involved in the regulation of sleep and wakefulness. The sequence is that of Gamma-aminobutyric acid receptor subunit delta from Rattus norvegicus (Rat).